A 396-amino-acid chain; its full sequence is Elongation factor Tu (396 aa).

One can recognise a tr-type G domain in the interval 10-206 (KPHVNVGTIG…ALDSYIPEPE (197 aa)). Positions 19-26 (GHVDHGKT) are G1. 19–26 (GHVDHGKT) lines the GTP pocket. Mg(2+) is bound at residue Thr26. Residues 60 to 64 (GITIN) form a G2 region. A G3 region spans residues 81–84 (DCPG). Residues 81–85 (DCPGH) and 136–139 (NKAD) contribute to the GTP site. Residues 136-139 (NKAD) form a G4 region. The interval 174–176 (SAL) is G5.

The protein belongs to the TRAFAC class translation factor GTPase superfamily. Classic translation factor GTPase family. EF-Tu/EF-1A subfamily. In terms of assembly, monomer.

It is found in the cytoplasm. It catalyses the reaction GTP + H2O = GDP + phosphate + H(+). Its function is as follows. GTP hydrolase that promotes the GTP-dependent binding of aminoacyl-tRNA to the A-site of ribosomes during protein biosynthesis. This is Elongation factor Tu from Nitrosomonas europaea (strain ATCC 19718 / CIP 103999 / KCTC 2705 / NBRC 14298).